A 917-amino-acid chain; its full sequence is Transcriptional regulatory protein SEF1 (917 aa).

Positions 1–88 are disordered; it reads MKFEKGKVRI…SKPTGHRPVT (88 aa). Pro residues predominate over residues 13 to 27; sequence KPSPTPTNPQTPLPL. The segment covering 56–70 has biased composition (low complexity); that stretch reads SNSTASTPNSATPTS. A compositionally biased stretch (polar residues) spans 71-81; that stretch reads VGTPPQKTSKP. The zn(2)-C6 fungal-type DNA-binding region spans 90-120; the sequence is CTFCRQHKIKCNASDNYPNPCERCKKMGLKC. Residues 129–164 are a coiled coil; it reads RKGSQIQSLKSDVDELKAKIEMLTKNESLLTQALNQ. 2 disordered regions span residues 168 to 212 and 778 to 849; these read NHAS…ASPI and QQYP…PFIL. Over residues 171-184 the composition is skewed to low complexity; that stretch reads SQQQQSSGSQSQQQ. The span at 191–212 shows a compositional bias: polar residues; sequence RALSYTSANSSPQVAFSNASPI. Residues 778–827 are compositionally biased toward low complexity; sequence QQYPMQQDQQQQEPSQQQQQKHSQQSQQYQQQQQSNQQQPHLQHQRQFQQ.

In terms of assembly, interacts with SSN3 and SFU1. Phosphorylated by SSN3 under iron-depleted conditions which leads to nuclear localization.

The protein localises to the cytoplasm. It localises to the nucleus. Transcription factor which plays an essential role in virulence by activating the transcription of iron uptake genes such as FRE7 in iron-poor environments such as the host bloodstream and internal organs. Promotes commensalism in a mouse model of gastrointestinal infection. The chain is Transcriptional regulatory protein SEF1 (SEF1) from Candida albicans (strain SC5314 / ATCC MYA-2876) (Yeast).